A 455-amino-acid chain; its full sequence is mRNA cleavage and polyadenylation factor CLP1 (455 aa).

Glutamate 28 and lysine 67 together coordinate ATP. The tract at residues 112-131 is disordered; it reads EAAARNNGGGRSAPHGPRVL. 137–142 is a binding site for ATP; the sequence is GCGRTS.

It belongs to the Clp1 family. Clp1 subfamily. Component of a pre-mRNA cleavage factor complex. Interacts directly with PCF11.

It is found in the nucleus. Required for endonucleolytic cleavage during polyadenylation-dependent pre-mRNA 3'-end formation. This Pyricularia oryzae (strain 70-15 / ATCC MYA-4617 / FGSC 8958) (Rice blast fungus) protein is mRNA cleavage and polyadenylation factor CLP1.